The chain runs to 479 residues: Transcriptional regulator ERG (479 aa).

Residues 34–47 (TASSSSDYGQTSKM) show a composition bias toward polar residues. 2 disordered regions span residues 34–56 (TASS…QQDW) and 72–92 (PSQV…KGGK). Phosphoserine is present on residues S48, S81, and S96. The 87-residue stretch at 113 to 199 (MPPPNMTTNE…SHLHYLRETP (87 aa)) folds into the PNT domain. The interval 242–293 (QRITTRPDLPYEPPRRSAWTGHGHPTPQSKAAQPSPSTVPKTEDQRPQLDPY) is disordered. Polar residues predominate over residues 267 to 281 (TPQSKAAQPSPSTVP). A Glycyl lysine isopeptide (Lys-Gly) (interchain with G-Cter in SUMO2) cross-link involves residue K282. Positions 311-391 (IQLWQFLLEL…HGKRYAYKFD (81 aa)) form a DNA-binding region, ETS.

Belongs to the ETS family. Identified in a IGF2BP1-dependent mRNP granule complex containing untranslated mRNAs. Interacts with SETDB1.

It localises to the nucleus. Its subcellular location is the cytoplasm. Transcriptional regulator. May participate in transcriptional regulation through the recruitment of SETDB1 histone methyltransferase and subsequent modification of local chromatin structure. The sequence is that of Transcriptional regulator ERG (ERG) from Homo sapiens (Human).